A 107-amino-acid polypeptide reads, in one-letter code: Phycocyanobilin lyase subunit beta (107 aa).

This sequence belongs to the CpcE/RpcE/PecE family. CpcE and CpcF associate to form a lyase.

In terms of biological role, required for the chromophorylation of the CpcA gene product. This Mastigocladus laminosus (Fischerella sp.) protein is Phycocyanobilin lyase subunit beta (cpcF).